Here is a 330-residue protein sequence, read N- to C-terminus: Putative protein DDB_G0285185 (330 aa).

Residues 212-240 (NKLQNQVQSSPKLSSPITKNKEQIVSTTS) are disordered. Residues 214–240 (LQNQVQSSPKLSSPITKNKEQIVSTTS) are compositionally biased toward polar residues.

The polypeptide is Putative protein DDB_G0285185 (Dictyostelium discoideum (Social amoeba)).